We begin with the raw amino-acid sequence, 219 residues long: 2-hydroxy-3-keto-5-methylthiopentenyl-1-phosphate phosphatase (219 aa).

The protein belongs to the HAD-like hydrolase superfamily. MtnX family.

The enzyme catalyses 2-hydroxy-5-methylsulfanyl-3-oxopent-1-enyl phosphate + H2O = 1,2-dihydroxy-5-(methylsulfanyl)pent-1-en-3-one + phosphate. It participates in amino-acid biosynthesis; L-methionine biosynthesis via salvage pathway; L-methionine from S-methyl-5-thio-alpha-D-ribose 1-phosphate: step 4/6. Functionally, dephosphorylates 2-hydroxy-3-keto-5-methylthiopentenyl-1-phosphate (HK-MTPenyl-1-P) yielding 1,2-dihydroxy-3-keto-5-methylthiopentene (DHK-MTPene). This is 2-hydroxy-3-keto-5-methylthiopentenyl-1-phosphate phosphatase from Bacillus cereus (strain ATCC 14579 / DSM 31 / CCUG 7414 / JCM 2152 / NBRC 15305 / NCIMB 9373 / NCTC 2599 / NRRL B-3711).